The primary structure comprises 90 residues: Serine protease inhibitor Cvsi-1 (90 aa).

Residues 1 to 19 form the signal peptide; it reads MDVVRTLILCVCLFGLTFA.

In terms of processing, contains 6 disulfide bonds. Detected in hemolymph (at protein level). In oysters collected in the summer the expression level is highest in the digestive gland with low levels of expression in gill, mantle, labial palp, style-sac midgut, gonad, heart, and hemocyte. In winter expression levels are higher in all tissues with highest expression levels observed in the digestive gland. Within the digestive gland expression is limited to the basophil cells of the digestive diverticula.

It localises to the secreted. Slow-binding inhibitor of serine proteases. The inhibitor rapidly binds to the protease forming a weak enzyme-inhibitor complex, and this is followed by a slow isomerization forming a tight-binding enzyme-inhibitor complex. Active against subtilisin A, perkinsin and trypsin with dissociation constants of 0.29 nM, 13.7 nM and 17.7 nM respectively. Not active against thermolysin, papain or pepsin. Has antiparasitic activity against the protozoan P.marinus. The chain is Serine protease inhibitor Cvsi-1 from Crassostrea virginica (Eastern oyster).